Consider the following 263-residue polypeptide: 5'-nucleotidase SurE (263 aa).

A divalent metal cation is bound by residues Asp15, Asp16, Ser46, and Asn102.

Belongs to the SurE nucleotidase family. Requires a divalent metal cation as cofactor.

The protein localises to the cytoplasm. The catalysed reaction is a ribonucleoside 5'-phosphate + H2O = a ribonucleoside + phosphate. Nucleotidase that shows phosphatase activity on nucleoside 5'-monophosphates. The chain is 5'-nucleotidase SurE from Chlorobaculum tepidum (strain ATCC 49652 / DSM 12025 / NBRC 103806 / TLS) (Chlorobium tepidum).